Here is a 127-residue protein sequence, read N- to C-terminus: Class I hydrophobin 1 (127 aa).

A signal peptide spans 1-20 (MLSLLSKAVSLAILVTAVVA). Disulfide bonds link Cys-53–Cys-108, Cys-60–Cys-102, Cys-61–Cys-94, and Cys-109–Cys-122. The N-linked (GlcNAc...) asparagine glycan is linked to Asn-66.

The protein belongs to the fungal hydrophobin family. Self-assembles to form functional amyloid fibrils called rodlets. Self-assembly into fibrillar rodlets occurs spontaneously at hydrophobic:hydrophilic interfaces and the rodlets further associate laterally to form amphipathic monolayers. As to expression, expressed everywhere in the mycelial tissues of developing fruiting bodies except for the top parts of the pileus (cap) and for the prehymenophore; but high level of the transcript is detected in the parts surrounding the prehymenophore.

It localises to the secreted. Its subcellular location is the cell wall. Aerial growth, conidiation, and dispersal of filamentous fungi in the environment rely upon a capability of their secreting small amphipathic proteins called hydrophobins (HPBs) with low sequence identity. Class I can self-assemble into an outermost layer of rodlet bundles on aerial cell surfaces, conferring cellular hydrophobicity that supports fungal growth, development and dispersal; whereas Class II form highly ordered films at water-air interfaces through intermolecular interactions but contribute nothing to the rodlet structure. Hyd1 is a class I hydrophobin that plays a role in fruiting body initiation rather than in mature fruit body maintenance. Seems to be involved in the formation in the extracellular matrix of lined air channels with a hydrophobic membrane. These channels may help to provide gas exchange during respiration in mycelial tissues of developing fruiting bodies and are formed all over the mycelial tissues of these developing fruiting bodies except for the top parts of the pileus (cap) and for the prehymenophore. The chain is Class I hydrophobin 1 from Lentinula edodes (Shiitake mushroom).